The chain runs to 340 residues: GTPase Obg (340 aa).

Positions 1-161 constitute an Obg domain; it reads MKFVDMTNIT…QHLLLELLLI (161 aa). One can recognise an OBG-type G domain in the interval 162-335; that stretch reads ANVGIFGLPN…LCNSIMKFIM (174 aa). Residues 168–175, 193–197, 215–218, 285–288, and 316–318 contribute to the GTP site; these read GLPNSGKS, FTTLV, DIPG, NKID, and SSI. Positions 175 and 195 each coordinate Mg(2+).

The protein belongs to the TRAFAC class OBG-HflX-like GTPase superfamily. OBG GTPase family. In terms of assembly, monomer. Mg(2+) serves as cofactor.

The protein resides in the cytoplasm. Functionally, an essential GTPase which binds GTP, GDP and possibly (p)ppGpp with moderate affinity, with high nucleotide exchange rates and a fairly low GTP hydrolysis rate. Plays a role in control of the cell cycle, stress response, ribosome biogenesis and in those bacteria that undergo differentiation, in morphogenesis control. This is GTPase Obg from Blochmanniella pennsylvanica (strain BPEN).